The primary structure comprises 306 residues: Curved DNA-binding protein (306 aa).

The J domain maps to 5–69 (DYYAIMGVKP…QRRAEYDQMW (65 aa)).

It is found in the cytoplasm. The protein localises to the nucleoid. DNA-binding protein that preferentially recognizes a curved DNA sequence. It is probably a functional analog of DnaJ; displays overlapping activities with DnaJ, but functions under different conditions, probably acting as a molecular chaperone in an adaptive response to environmental stresses other than heat shock. Lacks autonomous chaperone activity; binds native substrates and targets them for recognition by DnaK. Its activity is inhibited by the binding of CbpM. In Escherichia coli (strain SMS-3-5 / SECEC), this protein is Curved DNA-binding protein.